The following is a 347-amino-acid chain: NADH-ubiquinone oxidoreductase chain 2 (347 aa).

A run of 11 helical transmembrane segments spans residues 3–23 (PPILFTILLTVISGTMIVLMS), 25–45 (HWLMIWIGFEMNTLAIIPILM), 59–79 (YFLTQATASMILMMGITINLM), 96–116 (TMMTIALAMKLGLAPFHFWVP), 122–142 (VHMSSGLILLTWQKIAPLLVL), 149–169 (IDPNLLLPMAMMSVLIGGWGG), 178–198 (ILAYSSIAHMGWMATITLYNP), 200–220 (MMLLNLTIYIIMTLTTFMLFM), 242–262 (SLILMLMLSLGGLPPLSGFIP), 274–294 (EMIIMPTLLAITALLNLYFYM), and 323–343 (MILLPPLTVISTMLLPITPLL).

The protein belongs to the complex I subunit 2 family. Core subunit of respiratory chain NADH dehydrogenase (Complex I) which is composed of 45 different subunits. Interacts with TMEM242.

Its subcellular location is the mitochondrion inner membrane. The enzyme catalyses a ubiquinone + NADH + 5 H(+)(in) = a ubiquinol + NAD(+) + 4 H(+)(out). Its function is as follows. Core subunit of the mitochondrial membrane respiratory chain NADH dehydrogenase (Complex I) that is believed to belong to the minimal assembly required for catalysis. Complex I functions in the transfer of electrons from NADH to the respiratory chain. The immediate electron acceptor for the enzyme is believed to be ubiquinone. The protein is NADH-ubiquinone oxidoreductase chain 2 of Suricata suricatta (Meerkat).